We begin with the raw amino-acid sequence, 458 residues long: Alpha-2C adrenergic receptor (458 aa).

The Extracellular portion of the chain corresponds to 1–51; it reads MASPALAAALAAAAAEGPNGSDAGEWGSGGGANASGTDWVPPPGQYSAGAV. N19 and N33 each carry an N-linked (GlcNAc...) asparagine glycan. The helical transmembrane segment at 52–76 threads the bilayer; the sequence is AGLAAVVGFLIVFTVVGNVLVVIAV. Topologically, residues 77–88 are cytoplasmic; sequence LTSRALRAPQNL. A helical transmembrane segment spans residues 89–114; sequence FLVSLASADILVATLVMPFSLANELM. Over 115–124 the chain is Extracellular; it reads AYWYFGQVWC. C124 and C202 form a disulfide bridge. A helical transmembrane segment spans residues 125-147; the sequence is GVYLALDVLFCTSSIVHLCAISL. Over 148-168 the chain is Cytoplasmic; sequence DRYWSVTQAVEYNLKRTPRRV. Residues 169 to 191 traverse the membrane as a helical segment; it reads KATIVAVWLISAVISFPPLVSFY. At 192–207 the chain is on the extracellular side; sequence RRPDGAAYPQCGLNDE. A helical transmembrane segment spans residues 208 to 231; that stretch reads TWYILSSCIGSFFAPCLIMGLVYA. The Cytoplasmic portion of the chain corresponds to 232-379; that stretch reads RIYRVAKLRT…QAREKRFTFV (148 aa). Positions 245 to 343 are disordered; sequence SEKRGPAGPD…SPGPGGRLSR (99 aa). Basic residues predominate over residues 291 to 303; sequence RRRRRGALRRGGR. A helical membrane pass occupies residues 380–403; the sequence is LAVVMGVFVLCWFPFFFSYSLYGI. At 404 to 416 the chain is on the extracellular side; that stretch reads CREACQLPEPLFK. Residues 417–437 traverse the membrane as a helical segment; it reads FFFWIGYCNSSLNPVIYTVFN. At 438-458 the chain is on the cytoplasmic side; that stretch reads QDFRRSFKHILFRRRRRGFRQ.

Belongs to the G-protein coupled receptor 1 family. Adrenergic receptor subfamily. ADRA2C sub-subfamily.

It is found in the cell membrane. Functionally, alpha-2 adrenergic receptors mediate the catecholamine-induced inhibition of adenylate cyclase through the action of G proteins. The chain is Alpha-2C adrenergic receptor (Adra2c) from Mus musculus (Mouse).